The sequence spans 225 residues: Thymidylate kinase (225 aa).

ATP is bound at residue 9 to 16 (GIEGCGKT).

The protein belongs to the thymidylate kinase family.

It carries out the reaction dTMP + ATP = dTDP + ADP. Functionally, phosphorylation of dTMP to form dTDP in both de novo and salvage pathways of dTTP synthesis. The polypeptide is Thymidylate kinase (Geobacter sp. (strain M21)).